The chain runs to 609 residues: Interleukin-1 receptor-associated kinase 3 (609 aa).

One can recognise a Death domain in the interval 41–106 (WRGLAERLSN…RAIHLIINYG (66 aa)). T110 carries the phosphothreonine modification. Residues 178–463 (FHKDFLIGEG…SSLESTQPSL (286 aa)) form the Protein kinase domain. Residues 184–192 (IGEGEIFEV), K205, 308–311 (SSAN), and D324 each bind ATP. Position 480 is a phosphoserine (S480).

It belongs to the protein kinase superfamily. TKL Ser/Thr protein kinase family. Pelle subfamily. As to quaternary structure, monomer. Homodimer. May interact with IRAK4 (when phosphorylated). Interacts (when phosphorylated at Thr-110) with PIN1 (via WW domain) in response to IL33-mediated (but not TLR4 ligand LPS) dendritic cell stimulation. In terms of tissue distribution, expressed in inflamed lung macrophages (at protein level). Expressed in dendritic cells (at protein level). Highly expressed in liver and thymus and at lower levels in heart, brain, spleen and kidney.

The protein localises to the cytoplasm. Its subcellular location is the nucleus. Functionally, putative inactive protein kinase which regulates signaling downstream of immune receptors including IL1R and Toll-like receptors. Inhibits dissociation of IRAK1 and IRAK4 from the Toll-like receptor signaling complex by either inhibiting the phosphorylation of IRAK1 and IRAK4 or stabilizing the receptor complex. Upon IL33-induced lung inflammation, positively regulates expression of IL6, CSF3, CXCL2 and CCL5 mRNAs in dendritic cells. This chain is Interleukin-1 receptor-associated kinase 3, found in Mus musculus (Mouse).